Reading from the N-terminus, the 208-residue chain is FMN-dependent NADH:quinone oxidoreductase 1 (208 aa).

Ser-10 contacts FMN.

It belongs to the azoreductase type 1 family. In terms of assembly, homodimer. FMN serves as cofactor.

The catalysed reaction is 2 a quinone + NADH + H(+) = 2 a 1,4-benzosemiquinone + NAD(+). The enzyme catalyses N,N-dimethyl-1,4-phenylenediamine + anthranilate + 2 NAD(+) = 2-(4-dimethylaminophenyl)diazenylbenzoate + 2 NADH + 2 H(+). Its function is as follows. Quinone reductase that provides resistance to thiol-specific stress caused by electrophilic quinones. Contributes to resistance to 2-methylhydroquinone (2-MHQ) and catechol. Also exhibits azoreductase activity. Catalyzes the reductive cleavage of the azo bond in aromatic azo compounds to the corresponding amines. The chain is FMN-dependent NADH:quinone oxidoreductase 1 from Bacillus subtilis (strain 168).